The primary structure comprises 500 residues: Probable cytosol aminopeptidase (500 aa).

The Mn(2+) site is built by lysine 264 and aspartate 269. Lysine 276 is an active-site residue. Residues aspartate 287, aspartate 346, and glutamate 348 each coordinate Mn(2+). Residue arginine 350 is part of the active site.

It belongs to the peptidase M17 family. The cofactor is Mn(2+).

It localises to the cytoplasm. The enzyme catalyses Release of an N-terminal amino acid, Xaa-|-Yaa-, in which Xaa is preferably Leu, but may be other amino acids including Pro although not Arg or Lys, and Yaa may be Pro. Amino acid amides and methyl esters are also readily hydrolyzed, but rates on arylamides are exceedingly low.. It catalyses the reaction Release of an N-terminal amino acid, preferentially leucine, but not glutamic or aspartic acids.. Its function is as follows. Presumably involved in the processing and regular turnover of intracellular proteins. Catalyzes the removal of unsubstituted N-terminal amino acids from various peptides. The chain is Probable cytosol aminopeptidase from Rhodopseudomonas palustris (strain TIE-1).